We begin with the raw amino-acid sequence, 340 residues long: Sesquiterpene synthase 6 (340 aa).

The Mg(2+) site is built by D90, N229, S233, and E237. Positions 90 to 94 match the DDXXD motif motif; the sequence is DDITD. An NSE/DTE motif motif is present at residues 229-237; the sequence is NDIYSFNNE. R316 and Y317 together coordinate (2E,6E)-farnesyl diphosphate.

Belongs to the terpene synthase family. Mg(2+) serves as cofactor.

The catalysed reaction is (2E,6E)-farnesyl diphosphate = delta-cadinene + diphosphate. It catalyses the reaction (2E,6E)-farnesyl diphosphate = bicyclogermacrene + diphosphate. Functionally, terpene cyclase that catalyzes the cyclization of farnesyl diphosphate (FPP) to various sesquiterpenes, including bicycloelemene, alpha-gurjunene, 9-epi-caryophylene, bicyclosesquiphellandrene, bicyclogermacrene and delta-cadinene. The polypeptide is Sesquiterpene synthase 6 (Postia placenta (strain ATCC 44394 / Madison 698-R) (Brown rot fungus)).